The chain runs to 115 residues: MKTIIVFLSLLVLATKFGDAKEGVNQKQKKEVTQNEFREEYLNEMAAMSLVQQLEAIERALFENEAGRNSRQKRCLGENVPCGDNIPCCGKLACEKTAGYGWWYKSPYCVKPTSG.

An N-terminal signal peptide occupies residues 1–20; sequence MKTIIVFLSLLVLATKFGDA. Positions 21-74 are excised as a propeptide; that stretch reads KEGVNQKQKKEVTQNEFREEYLNEMAAMSLVQQLEAIERALFENEAGRNSRQKR. Disulfide bonds link C75/C89, C82/C94, and C88/C109.

The protein belongs to the neurotoxin 14 (magi-1) family. 03 (ICK-30-40) subfamily. Expressed by the venom gland.

Its subcellular location is the secreted. Functionally, ion channel inhibitor. This chain is U17-barytoxin-Tl1b, found in Trittame loki (Brush-footed trapdoor spider).